The sequence spans 309 residues: Phytoene synthase (309 aa).

It belongs to the phytoene/squalene synthase family. ATP serves as cofactor. Requires Mn(2+) as cofactor. It depends on Mg(2+) as a cofactor.

It functions in the pathway carotenoid biosynthesis; phytoene biosynthesis. Functionally, involved in the biosynthesis of carotenoids. Catalyzes the condensation of two molecules of geranylgeranyl diphosphate (GGPP) to give prephytoene diphosphate (PPPP) and the subsequent rearrangement of the cyclopropylcarbinyl intermediate to yield phytoene. The polypeptide is Phytoene synthase (crtB) (Pseudescherichia vulneris (Escherichia vulneris)).